A 600-amino-acid chain; its full sequence is Albumin (600 aa).

Positions 1-10 (LLFLFSSAYS) are cleaved as a signal peptide. Positions 11 to 16 (RGVFRR) are excised as a propeptide. 3 Albumin domains span residues 11 to 202 (RGVF…DELR), 203 to 395 (DEGK…EFQP), and 396 to 593 (LVEE…KFVA). Histidine 19 contacts Cu cation. At serine 21 the chain carries Phosphoserine. Ca(2+)-binding residues include glutamate 22 and aspartate 29. Cysteines 69 and 78 form a disulfide. Phosphoserine is present on residues serine 74 and serine 81. Position 83 (histidine 83) interacts with Zn(2+). 6 cysteine pairs are disulfide-bonded: cysteine 91–cysteine 107, cysteine 106–cysteine 117, cysteine 140–cysteine 185, cysteine 184–cysteine 193, cysteine 216–cysteine 262, and cysteine 261–cysteine 269. Position 99 is a phosphothreonine (threonine 99). Lysine 221 bears the N6-succinyllysine mark. (4Z,15Z)-bilirubin IXalpha is bound at residue lysine 256. Glutamate 260 contributes to the Ca(2+) binding site. Zn(2+)-binding residues include histidine 263 and aspartate 265. Positions 265, 268, 271, and 275 each coordinate Ca(2+). 8 disulfides stabilise this stretch: cysteine 281-cysteine 295, cysteine 294-cysteine 305, cysteine 332-cysteine 377, cysteine 376-cysteine 385, cysteine 408-cysteine 454, cysteine 453-cysteine 464, cysteine 477-cysteine 493, and cysteine 492-cysteine 503. Serine 289 bears the Phosphoserine mark. Serine 435 carries the post-translational modification Phosphoserine. Phosphothreonine occurs at positions 436 and 438. Lysine 452 carries the N6-succinyllysine modification. Position 505 is a phosphoserine (serine 505). 2 disulfides stabilise this stretch: cysteine 530–cysteine 575 and cysteine 574–cysteine 583. Lysine 535 carries the post-translational modification N6-succinyllysine. Lysine 550 carries the N6-methyllysine modification. Lysine 580 is subject to N6-succinyllysine.

The protein belongs to the ALB/AFP/VDB family. In terms of assembly, interacts with FCGRT; this interaction regulates ALB homeostasis. Interacts with TASOR. In plasma, occurs in a covalently-linked complex with chromophore-bound alpha-1-microglobulin; this interaction does not prevent fatty acid binding to ALB. Post-translationally, phosphorylated by FAM20C in the extracellular medium. Plasma.

The protein resides in the secreted. Binds water, Ca(2+), Na(+), K(+), fatty acids, hormones, bilirubin and drugs. Its main function is the regulation of the colloidal osmotic pressure of blood. Major zinc transporter in plasma, typically binds about 80% of all plasma zinc. Major calcium and magnesium transporter in plasma, binds approximately 45% of circulating calcium and magnesium in plasma. Potentially has more than two calcium-binding sites and might additionally bind calcium in a non-specific manner. The shared binding site between zinc and calcium at residue Asp-265 suggests a crosstalk between zinc and calcium transport in the blood. The rank order of affinity is zinc &gt; calcium &gt; magnesium. Binds to the bacterial siderophore enterobactin and inhibits enterobactin-mediated iron uptake of E.coli from ferric transferrin, and may thereby limit the utilization of iron and growth of enteric bacteria such as E.coli. Does not prevent iron uptake by the bacterial siderophore aerobactin. This chain is Albumin (ALB), found in Macaca mulatta (Rhesus macaque).